We begin with the raw amino-acid sequence, 3371 residues long: PNEEAAAVWLSHGPAAERGFTIWPSAFVLQPKEKIVVSITWTPLKGGRIRETITFLVNDILKHQAILLGNAEEPKKKKRTLWDTINKKKASASSRHNKKASNIQNVNKTFNVSPKADRVRSPLQACENLATNGNCSPPESNPLILEENKLPISPISPASQECHRGTCLPLPVRRSTTYTSLPASENGGLVKADGANTAEDFHFNEKGITETSFDSIDNVNSQIEENGKLTLTPNYSSSLNITQSQGHFLSPDSFVNNSHASNNEPEFVKCLSPDMFVKGNTRPVILESKRVHEICRKILSPDSFINDNYGLNEDLETESINPILSPNQFLKDNMAYICVSQQTCQLPLSTGHFQDSQPPQDERKNAAVPCISECQQLESPKATFEASKALEVMSNSYTFKKQNQPKFSAVQDISSHSRKKPIKRRPILSATVTKRKPTCAVENQMETVKPKAKRCLNVVVGDCXKETDDQKEKDDFHPFLPIRDLIXXRPKSSKNIVTPPCKVASVARKRKSEGHTGDENVRITVTECXEXQEVKRPHFSPVESKTSTVKHTKKVVTSSLKRVSHREKLNLKKKTDSLGYRTPKTNRRTRPFVPVAQSNLTFIKPLKGIPRHPMPFAAKNMFYDERWKEKQEQGFTWWLNFILTPDDFTVKTNISEVNASTLLLGVESQHKVSVPKAPTKDEVSLRAYTARCRLNRLRRAACRLFTSEKMVKAMKKLEIEIEARRLIVRKDRHLWKDVGERQKVLNWLLSYNPLWLRIGLETIYGELVPLEDNSDVTGLAMFILNRLLWNPDIAAEYRHPSVPHLYRDGHEEALSKFTLKKLLLLICFLDYAKISRLIDHDPCLFCKDAEFKASKEILLAFSRDFLGGEGDLSRHLSLLGFPVTHVQMPFDEFDFAVKNLAVDLQCGVRLVRTMELLTQNWNLSKKLRIPAISRLQKMHNVDIVLEILKSRGIQLNDEHGNAILSKDIVDRHREKTLALLWKIALAFQVDISLNLDQLKEEIDFLKNTQSMKKTMSALSCRPDAVISKKRDERHSGPFEQCSESVKLLMDWVNAVCGFYNKKVENFTVSFSDGRVLCYLIHHYHPCYVPFDAICQRTTQTVECTHTGSVVLNSSSESDGSFLDFSLKPPDQENTSELYKELLENEKKNFQLVRSAARDLGGIPAMIHHSDMSNTIPDEKVVITYLSFLCARLLDLRKETRAARLIQTTWRQYKLKKDLKHHQERDKAARIIQSAIINFLTKQRFKKKVSAALVIQKYWRRALAKRKLLMLKKEKLERVHSKSASIIQRHWRRYSTRKQFLKLKYYSIFLQSKIRMIIAVASYKRYHWATVTIQRRWRAHVRSKQDRQRYELLRSSTLVIQFAFRRWRRRKRQSQINAAITLQRAFRQWRVQKCAQEERAAVVIQSWYRMHRELRKYIHLRSCVIIIQARFRCFQAQKLYTRTRESILTLQKHYRAYVKGKVERTGYLQKRAAAIRLQAAFRGRRARNLCRQIKAACVLQSYWRMRQDRLRFLNLKKNIIRLQAHIRRRQQLHTYQKMKKAALIIQIHFRAYMSAKEVLASYQKTRSAVIVLQSACRRMQARKKFLHILTSIVKIQSYYRAYASRRKFLRLKKATVKLQSIVRMKLARKQYLHLRAIAQQREEHRRASCIKLQAFLRGYLVRKQVRLQRKAAVSLQSYFRMRKMRLDYLKVCHAAVVIQRYYRAHRAGAQQRKHFLQVRRAVTYLQATYRGYKVRRQLQQQSAAALKIQAAFRGYRQRTKYQSVLQSALKIQRWYRTHKTVSAIRSHFFKTRTAAISLQSAYRGWKVRKQMRKEHEAAVKIQSAFRTARAQKEFRVLKTAASVIQQHLRARAAGRRQRTEYTALRRAAVMLQSAWRGRAARRRIQKQQRCAIIIQAYYRRHVQQKRWEIMKKAAHLIQMHYRAYRTGRKQHHLFLKTKXAAIILQSAFRGVRVRKKVKEMHQAAATIQSRYRAYQARKKYASYRAAAVIIQRWYRAAKLAGRQREEYLAVKKAALKIQAVYRGVRARRHIRRMHMAATLIKAAFKMQQSRRRYQQMRTAAIIIQVRYRAYCQGRAQRAKYLMILKAVALLQAALRGARVRQSLRRMRTAATLIQAHYRGRRQQAYFNKLKKVTKTVQQKYRAARERHAQLRRYNQLRRSAICIQAAFRGMRARRRLKAMHSAAAVIQRRFRTLGMRRRFLSLRKTAVWVQRKYRAKVCTRHHVQQLRLQKAAIKIQSWYRGWMVRKKIQEMRRAATVLQAAFRRHRTRARYQAWRCASQVIQQRFRAGRAARLQRRQYLQQRHSALVLQAAFRGMRVRRRLKRMHASATLIQSRFRSIMMRKRFLSLKKAAVFVQRKYRATICAKHHLHQFLELQKAIIIIQASYQRRMVKKQLQEMHRAAALIQASFRMHRARLAFQTWKHAAVLIQQRYRACRAAKLQRALYIRWRHSAVVIQAAYKGLKARQLLREKHRAAVIIQSTYRMYRQHFFYQKLQWATKVIQERYRASKRKALQHDALKAATCARAGFQDMVVRRLIEERRHQAAITIQEHFRAFKTRKHYLHFRAKVVFVQRRYRELMAVRTQAVICIQSCFRGFKARRGIQRMHLAATRIQSCYRRHRARADYQAKKRAVVVIQNHYRSYIRVKMERKEFLAIQKSARTIQAAFRGMKVRQKLKTMPDKKMAAPATQPAFYCHRTESQHEAGESPALVAQGLYKTSLVGPSQETEQHSQRKAAVTIQKAFRKMVTRRLEKQRRAAVRIQSFLQMAVYRRRFLQQKRAALTLQRCFRTQQSRKQFLLYREAAVGLQNPHRTSLPAKHQRELYLQIRSSVIIIQARVKGFIQKRKFRELKDSTIKIQAVWRRHKARKYLREVKAACRIQAWYRCWKARREYLAVLRAVRIIQRCFCXQQQRRRFLNVRASAVIIQRRWRTVLSGRTTHEQSLMTKRHQAACLIQANFRGYKARQAFLQQKSAALTIQRYIRARKAGKHQRMKYVELKKSTVVLQALVRGWLVRKRISEQRAKIRLLHFAAAAFYHLSALRIQRAYRRHVALKHANNKQLNSAICIQRWFRARSQRKRFLQKYSIINIQREAREQARQHSRAASVIQRAVRRFLLRKKQENFNKRIAKIQALWRGYSWRKKNDSTKTKAIRQRLQCVNREIREESKLYHRTAVALHHLLTYKYLSTVLEALKHLEAVTRLSSICCEKMAQSGAISKIFVLIRSCNRSVPCMEVIRYAMQVLLNVAKYEKTTSAIYDVENCVDTLLELMQMYQEKSGDKVADKSRSIFTKTCCLLAVLLKTTTRALDVQSRSKVVDRIYSLYKLTAHKHKVNTERILCKQKKNSSVSLSFFPETPVRTTMVSRLKPDWVLRRDNV.

Phosphoserine is present on residues S212, S215, S300, S325, and S540. Residues 536 to 559 (RPHFSPVESKTSTVKHTKKVVTSS) are disordered. The Calponin-homology (CH) 1 domain maps to 852–988 (KASKEILLAF…LLWKIALAFQ (137 aa)). Residues 989 to 1014 (VDISLNLDQLKEEIDFLKNTQSMKKT) adopt a coiled-coil conformation. S1035 bears the Phosphoserine mark. Residues 1042 to 1193 (SESVKLLMDW…YLSFLCARLL (152 aa)) form the Calponin-homology (CH) 2 domain. IQ domains lie at 1198 to 1227 (ETRAARLIQTTWRQYKLKKDLKHHQERDKA), 1396 to 1427 (EERAAVVIQSWYRMHRELRKYIHLRSCVIIIQ), 1469 to 1500 (KRAAAIRLQAAFRGRRARNLCRQIKAACVLQS), 1564 to 1593 (TRSAVIVLQSACRRMQARKKFLHILTSIVK), 1587 to 1616 (ILTSIVKIQSYYRAYASRRKFLRLKKATVK), 1610 to 1639 (LKKATVKLQSIVRMKLARKQYLHLRAIAQQ), 1644 to 1673 (RRASCIKLQAFLRGYLVRKQVRLQRKAAVS), 1667 to 1698 (QRKAAVSLQSYFRMRKMRLDYLKVCHAAVVIQ), 1717 to 1746 (VRRAVTYLQATYRGYKVRRQLQQQSAAALK), 1740 to 1769 (QSAAALKIQAAFRGYRQRTKYQSVLQSALK), 1790 to 1819 (TRTAAISLQSAYRGWKVRKQMRKEHEAAVK), 1813 to 1844 (EHEAAVKIQSAFRTARAQKEFRVLKTAASVIQ), 1863 to 1894 (LRRAAVMLQSAWRGRAARRRIQKQQRCAIIIQ), 1886 to 1917 (QQRCAIIIQAYYRRHVQQKRWEIMKKAAHLIQ), 1936 to 1965 (TKXAAIILQSAFRGVRVRKKVKEMHQAAAT), 1959 to 1990 (MHQAAATIQSRYRAYQARKKYASYRAAAVIIQ), 2009 to 2040 (VKKAALKIQAVYRGVRARRHIRRMHMAATLIK), 2032 to 2063 (MHMAATLIKAAFKMQQSRRRYQQMRTAAIIIQ), 2082 to 2113 (ILKAVALLQAALRGARVRQSLRRMRTAATLIQ), 2105 to 2134 (MRTAATLIQAHYRGRRQQAYFNKLKKVTKT), 2155 to 2186 (LRRSAICIQAAFRGMRARRRLKAMHSAAAVIQ), 2227 to 2258 (LQKAAIKIQSWYRGWMVRKKIQEMRRAATVLQ), 2250 to 2281 (MRRAATVLQAAFRRHRTRARYQAWRCASQVIQ), 2300 to 2331 (QRHSALVLQAAFRGMRVRRRLKRMHASATLIQ), 2323 to 2354 (MHASATLIQSRFRSIMMRKRFLSLKKAAVFVQ), 2396 to 2427 (MHRAAALIQASFRMHRARLAFQTWKHAAVLIQ), 2446 to 2477 (WRHSAVVIQAAYKGLKARQLLREKHRAAVIIQ), 2539 to 2570 (RHQAAITIQEHFRAFKTRKHYLHFRAKVVFVQ), 2580 to 2609 (RTQAVICIQSCFRGFKARRGIQRMHLAATR), 2603 to 2634 (MHLAATRIQSCYRRHRARADYQAKKRAVVVIQ), 2653 to 2682 (IQKSARTIQAAFRGMKVRQKLKTMPDKKMA), 2729 to 2760 (QRKAAVTIQKAFRKMVTRRLEKQRRAAVRIQS), 2751 to 2780 (QRRAAVRIQSFLQMAVYRRRFLQQKRAALT), 2824 to 2853 (IRSSVIIIQARVKGFIQKRKFRELKDSTIK), 2847 to 2878 (LKDSTIKIQAVWRRHKARKYLREVKAACRIQA), 2869 to 2900 (EVKAACRIQAWYRCWKARREYLAVLRAVRIIQ), 2944 to 2973 (RHQAACLIQANFRGYKARQAFLQQKSAALT), 2994 to 3025 (LKKSTVVLQALVRGWLVRKRISEQRAKIRLLH), 3096 to 3125 (HSRAASVIQRAVRRFLLRKKQENFNKRIAK), and 3119 to 3150 (FNKRIAKIQALWRGYSWRKKNDSTKTKAIRQR).

It localises to the cytoplasm. Its subcellular location is the cytoskeleton. It is found in the spindle. The protein resides in the nucleus. Probable role in mitotic spindle regulation and coordination of mitotic processes. May have a preferential role in regulating neurogenesis. This is Abnormal spindle-like microcephaly-associated protein homolog (ASPM) from Bos taurus (Bovine).